A 147-amino-acid polypeptide reads, in one-letter code: Prefoldin subunit alpha (147 aa).

It belongs to the prefoldin alpha subunit family. As to quaternary structure, heterohexamer of two alpha and four beta subunits.

The protein localises to the cytoplasm. Functionally, molecular chaperone capable of stabilizing a range of proteins. Seems to fulfill an ATP-independent, HSP70-like function in archaeal de novo protein folding. In Saccharolobus islandicus (strain Y.N.15.51 / Yellowstone #2) (Sulfolobus islandicus), this protein is Prefoldin subunit alpha.